Consider the following 118-residue polypeptide: NADH-quinone oxidoreductase subunit A (118 aa).

The next 3 membrane-spanning stretches (helical) occupy residues 5–25, 62–82, and 87–107; these read YAFI…PLVL, LYAL…PWAV, and LGLF…IGLV.

Belongs to the complex I subunit 3 family. NDH-1 is composed of 14 different subunits. Subunits NuoA, H, J, K, L, M, N constitute the membrane sector of the complex.

Its subcellular location is the cell membrane. The catalysed reaction is a quinone + NADH + 5 H(+)(in) = a quinol + NAD(+) + 4 H(+)(out). NDH-1 shuttles electrons from NADH, via FMN and iron-sulfur (Fe-S) centers, to quinones in the respiratory chain. The immediate electron acceptor for the enzyme in this species is believed to be ubiquinone. Couples the redox reaction to proton translocation (for every two electrons transferred, four hydrogen ions are translocated across the cytoplasmic membrane), and thus conserves the redox energy in a proton gradient. In Herpetosiphon aurantiacus (strain ATCC 23779 / DSM 785 / 114-95), this protein is NADH-quinone oxidoreductase subunit A.